The chain runs to 364 residues: Chorismate synthase (364 aa).

The interval 41-60 is disordered; that stretch reads MQHDLDRRRPGTSRYTTARR. NADP(+)-binding residues include R48 and R54. FMN-binding positions include 125–127, 238–239, G278, 293–297, and R319; these read RSS, NA, and KPTSS.

Belongs to the chorismate synthase family. In terms of assembly, homotetramer. Requires FMNH2 as cofactor.

It catalyses the reaction 5-O-(1-carboxyvinyl)-3-phosphoshikimate = chorismate + phosphate. Its pathway is metabolic intermediate biosynthesis; chorismate biosynthesis; chorismate from D-erythrose 4-phosphate and phosphoenolpyruvate: step 7/7. Catalyzes the anti-1,4-elimination of the C-3 phosphate and the C-6 proR hydrogen from 5-enolpyruvylshikimate-3-phosphate (EPSP) to yield chorismate, which is the branch point compound that serves as the starting substrate for the three terminal pathways of aromatic amino acid biosynthesis. This reaction introduces a second double bond into the aromatic ring system. The polypeptide is Chorismate synthase (Shewanella sp. (strain ANA-3)).